A 217-amino-acid polypeptide reads, in one-letter code: Protein-L-isoaspartate O-methyltransferase (217 aa).

The active site involves serine 65.

Belongs to the methyltransferase superfamily. L-isoaspartyl/D-aspartyl protein methyltransferase family.

The protein resides in the cytoplasm. The enzyme catalyses [protein]-L-isoaspartate + S-adenosyl-L-methionine = [protein]-L-isoaspartate alpha-methyl ester + S-adenosyl-L-homocysteine. Its function is as follows. Catalyzes the methyl esterification of L-isoaspartyl residues in peptides and proteins that result from spontaneous decomposition of normal L-aspartyl and L-asparaginyl residues. It plays a role in the repair and/or degradation of damaged proteins. The sequence is that of Protein-L-isoaspartate O-methyltransferase from Methanoregula boonei (strain DSM 21154 / JCM 14090 / 6A8).